Consider the following 348-residue polypeptide: Isopentenyl-diphosphate delta-isomerase (348 aa).

5-6 is a binding site for substrate; sequence RK. Residues S61, 62–64, S92, and N120 each bind FMN; that span reads SMT. 92-94 contributes to the substrate binding site; that stretch reads SMR. Q159 serves as a coordination point for substrate. E160 lines the Mg(2+) pocket. Residues K189, S214, T219, 269–271, and 290–291 contribute to the FMN site; these read GLR and AR.

This sequence belongs to the IPP isomerase type 2 family. As to quaternary structure, homooctamer. Dimer of tetramers. Requires FMN as cofactor. NADPH is required as a cofactor. Mg(2+) serves as cofactor.

The protein localises to the cytoplasm. It catalyses the reaction isopentenyl diphosphate = dimethylallyl diphosphate. Involved in the biosynthesis of isoprenoids. Catalyzes the 1,3-allylic rearrangement of the homoallylic substrate isopentenyl (IPP) to its allylic isomer, dimethylallyl diphosphate (DMAPP). In Thermoplasma acidophilum (strain ATCC 25905 / DSM 1728 / JCM 9062 / NBRC 15155 / AMRC-C165), this protein is Isopentenyl-diphosphate delta-isomerase.